A 209-amino-acid polypeptide reads, in one-letter code: Redox-sensing transcriptional repressor Rex (209 aa).

A DNA-binding region (H-T-H motif) is located at residues 16–55 (LYYRFIQNLSLSGKQRVSSAELSEAVKVDSATIRRDFSYF). 90-95 (GVGNLG) contributes to the NAD(+) binding site.

It belongs to the transcriptional regulatory Rex family. As to quaternary structure, homodimer.

The protein resides in the cytoplasm. Functionally, modulates transcription in response to changes in cellular NADH/NAD(+) redox state. This Bacillus mycoides (strain KBAB4) (Bacillus weihenstephanensis) protein is Redox-sensing transcriptional repressor Rex.